A 290-amino-acid chain; its full sequence is Glutamate racemase (290 aa).

Residues 32-33 (DS) and 64-65 (YG) contribute to the substrate site. Cys-96 acts as the Proton donor/acceptor in catalysis. 97-98 (NT) lines the substrate pocket. The active-site Proton donor/acceptor is Cys-208. A substrate-binding site is contributed by 209–210 (TH).

This sequence belongs to the aspartate/glutamate racemases family.

The enzyme catalyses L-glutamate = D-glutamate. It functions in the pathway cell wall biogenesis; peptidoglycan biosynthesis. In terms of biological role, provides the (R)-glutamate required for cell wall biosynthesis. The chain is Glutamate racemase from Sodalis glossinidius (strain morsitans).